The sequence spans 1320 residues: Transcriptional activator MN1 (1320 aa).

Met-1 is subject to N-acetylmethionine. Disordered regions lie at residues 1-26, 92-121, 147-219, 231-411, 423-442, 474-615, 629-819, 840-1150, and 1247-1273; these read MFGL…FNET, FGGQ…FGGP, PPFA…SLEP, LEYN…EYPI, SEPV…NQRL, NGSM…AGRL, SAWF…KDNL, GAPN…PDEI, and PWEK…SASQ. A compositionally biased stretch (basic residues) spans 98 to 113; the sequence is HHGHPGSHHPHQHHPH. 2 stretches are compositionally biased toward low complexity: residues 202–214 and 291–309; these read SFHG…GSDS and QPPQ…QQQQ. Pro residues predominate over residues 338–366; it reads MQPPQQAPPPPQQQPPQQPPQQQPPPPPG. Over residues 498-514 the composition is skewed to pro residues; sequence FTPPVPDSFPSGPPLQH. Composition is skewed to low complexity over residues 523–550 and 564–578; these read QQQQ…QQQQ and RNQQ…LAQL. 2 stretches are compositionally biased toward gly residues: residues 582–596 and 701–710; these read GDVG…GPVG and QFGGSLGGLG. Residues 759-768 are compositionally biased toward low complexity; that stretch reads SGPGVNSPPS. Residues 769–784 are compositionally biased toward gly residues; it reads AGGGGGSSGGGGGGGA. Composition is skewed to low complexity over residues 798 to 809 and 895 to 905; these read SASKLGALSLGS and GTSSSGSKASG. Over residues 914 to 930 the composition is skewed to polar residues; sequence DGTSLSPNYTLESTSGN. Residues Ser-950 and Ser-954 each carry the phosphoserine modification. Positions 973-984 are enriched in low complexity; that stretch reads GVSPGQQQASGA. A Phosphoserine modification is found at Ser-1007. The segment covering 1048–1066 has biased composition (polar residues); it reads EVSTSYANEDEVSSSSDNP. Residue Ser-1081 is modified to Phosphoserine. Over residues 1118–1128 the composition is skewed to gly residues; that stretch reads YGGGGGPGHPG.

In terms of assembly, interacts with PBX1, PKNOX1, ZBTB24, E2F7, RING1. In terms of tissue distribution, widely expressed in fetal and adult tissues. Highest expression is observed in fetal brain and skeletal muscle, and adult skeletal muscle.

The protein localises to the nucleus. In terms of biological role, transcriptional activator which specifically regulates expression of TBX22 in the posterior region of the developing palate. Required during later stages of palate development for growth and medial fusion of the palatal shelves. Promotes maturation and normal function of calvarial osteoblasts, including expression of the osteoclastogenic cytokine TNFSF11/RANKL. Necessary for normal development of the membranous bones of the skull. May play a role in tumor suppression. The polypeptide is Transcriptional activator MN1 (MN1) (Homo sapiens (Human)).